We begin with the raw amino-acid sequence, 241 residues long: CD99 antigen-like protein 2 (241 aa).

A signal peptide spans 1–23 (MAKWGSPFVFALACLALSWRVYG). The Extracellular portion of the chain corresponds to 24-173 (DDFDLYDALG…TGFGSQAETG (150 aa)). The segment at 30 to 168 (DALGDPTEKP…NDGSDTGFGS (139 aa)) is disordered. Residues 143–154 (GGGGGGGGGRAT) are compositionally biased toward gly residues. The chain crosses the membrane as a helical span at residues 174–196 (TIAGIASALAMALIGAVSSYISY). Over 197–241 (QQKKFCFSIQEGLNAEYVKGEHMEAVVSEEPQVKYSVVESQSAIP) the chain is Cytoplasmic.

The protein belongs to the CD99 family.

The protein localises to the cell membrane. It is found in the cell junction. Functionally, may function as a homophilic adhesion molecule. In Xenopus tropicalis (Western clawed frog), this protein is CD99 antigen-like protein 2 (cd99l2).